We begin with the raw amino-acid sequence, 352 residues long: Putative killer cell immunoglobulin-like receptor-like protein KIR3DX1 (352 aa).

A signal peptide spans 1-16 (MAPKLITVLCLGFCLN). Ig-like C2-type domains follow at residues 17–112 (QKIC…NSLK) and 224–311 (PSLS…VTRC). Intrachain disulfides connect Cys-49-Cys-94 and Cys-244-Cys-295. Asn-78 carries N-linked (GlcNAc...) asparagine glycosylation.

As to expression, expressed in NK-cells.

Its subcellular location is the secreted. The protein is Putative killer cell immunoglobulin-like receptor-like protein KIR3DX1 (KIR3DX1) of Homo sapiens (Human).